We begin with the raw amino-acid sequence, 207 residues long: Small ribosomal subunit protein uS4c (207 aa).

An S4 RNA-binding domain is found at 92–153; it reads MRLDNILFRL…PKIYQSIITK (62 aa).

This sequence belongs to the universal ribosomal protein uS4 family. In terms of assembly, part of the 30S ribosomal subunit. Contacts protein S5. The interaction surface between S4 and S5 is involved in control of translational fidelity.

It is found in the plastid. The protein localises to the chloroplast. One of the primary rRNA binding proteins, it binds directly to 16S rRNA where it nucleates assembly of the body of the 30S subunit. Functionally, with S5 and S12 plays an important role in translational accuracy. This is Small ribosomal subunit protein uS4c (rps4) from Equisetum bogotense (Horsetail).